An 829-amino-acid polypeptide reads, in one-letter code: E3 ubiquitin-protein ligase Jade-2 (829 aa).

Residues 1 to 52 form a disordered region; the sequence is MEEKRRKYSISSDNSDTTDGHVTSTSASRCSKLPSSTKSGWPRQNEKKPSEV. Serine 9 and serine 15 each carry phosphoserine. The segment covering 9–39 has biased composition (polar residues); the sequence is SISSDNSDTTDGHVTSTSASRCSKLPSSTKS. Lysine 32 and lysine 38 each carry N6-acetyllysine. Serine 117 carries the phosphoserine modification. A PHD-type 1 zinc finger spans residues 199–249; it reads DVVCDVCRSPEGEDGNEMVFCDKCNVCVHQACYGILKVPTGSWLCRTCALG. Residues 251-285 form a C2HC pre-PHD-type zinc finger; sequence QPKCLLCPKRGGALKPTRSGTKWVHVSCALWIPEV. Position 298 is an N6-acetyllysine (lysine 298). The PHD-type 2 zinc finger occupies 309-365; that stretch reads LSCSLCKECTGTCIQCSMPSCITAFHVTCAFDRGLEMRTILADNDEVKFKSLCQEHS. 3 disordered regions span residues 362-383, 517-555, and 622-817; these read QEHS…PSQA, REPS…AGPE, and SFMR…REAG. The segment covering 522–535 has biased composition (basic residues); it reads RRSKGKKNDSKRKG. Positions 536–552 are enriched in basic and acidic residues; sequence REGPKGSSPEKKEKVKA. The segment covering 637–650 has biased composition (basic residues); it reads KARGRTRLPAKKKP. Positions 776–786 are enriched in basic and acidic residues; the sequence is ERPKVSLHFDT. Over residues 792–806 the composition is skewed to acidic residues; the sequence is FSDEEMSDSEVEAED.

It belongs to the JADE family. As to quaternary structure, component of the HBO1 complex composed at least of ING4 or ING5, MYST2/HBO1, MEAF6, and one of JADE1, JADE2 and JADE3. Interacts (via C-terminus) with KDM1A (via AOD/Tower domain).

It carries out the reaction S-ubiquitinyl-[E2 ubiquitin-conjugating enzyme]-L-cysteine + [acceptor protein]-L-lysine = [E2 ubiquitin-conjugating enzyme]-L-cysteine + N(6)-ubiquitinyl-[acceptor protein]-L-lysine.. Its pathway is protein modification; protein ubiquitination. Functionally, scaffold subunit of some HBO1 complexes, which have a histone H4 acetyltransferase activity. Acts as a E3 ubiquitin-protein ligase mediating the ubiquitination and subsequent proteasomal degradation of target protein histone demethylase KDM1A. Also acts as a ubiquitin ligase E3 toward itself. Positive regulator of neurogenesis. This chain is E3 ubiquitin-protein ligase Jade-2 (Jade2), found in Mus musculus (Mouse).